A 211-amino-acid chain; its full sequence is Probable nicotinate-nucleotide adenylyltransferase (211 aa).

It belongs to the NadD family.

It carries out the reaction nicotinate beta-D-ribonucleotide + ATP + H(+) = deamido-NAD(+) + diphosphate. It participates in cofactor biosynthesis; NAD(+) biosynthesis; deamido-NAD(+) from nicotinate D-ribonucleotide: step 1/1. In terms of biological role, catalyzes the reversible adenylation of nicotinate mononucleotide (NaMN) to nicotinic acid adenine dinucleotide (NaAD). This chain is Probable nicotinate-nucleotide adenylyltransferase, found in Legionella pneumophila (strain Lens).